The sequence spans 262 residues: Virulence regulon transcriptional activator VirF (262 aa).

One can recognise an HTH araC/xylS-type domain in the interval 161–258 (DQIRKIVEKN…GITPKKFYLY (98 aa)). 2 consecutive DNA-binding regions (H-T-H motif) follow at residues 178–199 (SDIS…ESEK) and 225–248 (INDV…NEYY).

As to quaternary structure, homodimer.

In terms of biological role, primary regulator of plasmid-encoded virulence genes. Activates the transcription of icsA (virG) and of virB, which is an activator of the ipaABCD virulence regulon. This chain is Virulence regulon transcriptional activator VirF (virF), found in Shigella dysenteriae.